A 262-amino-acid chain; its full sequence is Pyridoxine 5'-phosphate synthase (262 aa).

Residue asparagine 6 coordinates 3-amino-2-oxopropyl phosphate. 8–9 (DH) lines the 1-deoxy-D-xylulose 5-phosphate pocket. Arginine 17 lines the 3-amino-2-oxopropyl phosphate pocket. The Proton acceptor role is filled by histidine 43. 1-deoxy-D-xylulose 5-phosphate-binding residues include arginine 45 and histidine 50. The active-site Proton acceptor is the glutamate 70. Threonine 102 is a 1-deoxy-D-xylulose 5-phosphate binding site. Histidine 215 (proton donor) is an active-site residue. 3-amino-2-oxopropyl phosphate is bound by residues glycine 216 and 237–238 (GH).

The protein belongs to the PNP synthase family. In terms of assembly, homooctamer; tetramer of dimers.

Its subcellular location is the cytoplasm. The enzyme catalyses 3-amino-2-oxopropyl phosphate + 1-deoxy-D-xylulose 5-phosphate = pyridoxine 5'-phosphate + phosphate + 2 H2O + H(+). Its pathway is cofactor biosynthesis; pyridoxine 5'-phosphate biosynthesis; pyridoxine 5'-phosphate from D-erythrose 4-phosphate: step 5/5. Functionally, catalyzes the complicated ring closure reaction between the two acyclic compounds 1-deoxy-D-xylulose-5-phosphate (DXP) and 3-amino-2-oxopropyl phosphate (1-amino-acetone-3-phosphate or AAP) to form pyridoxine 5'-phosphate (PNP) and inorganic phosphate. In Helicobacter pylori (strain Shi470), this protein is Pyridoxine 5'-phosphate synthase.